We begin with the raw amino-acid sequence, 557 residues long: 2-succinyl-5-enolpyruvyl-6-hydroxy-3-cyclohexene-1-carboxylate synthase (557 aa).

The interval 183–206 (YGGTEHPPVAPPLPPRRAPRAAAP) is disordered.

Belongs to the TPP enzyme family. MenD subfamily. Homodimer. The cofactor is Mg(2+). It depends on Mn(2+) as a cofactor. Requires thiamine diphosphate as cofactor.

The catalysed reaction is isochorismate + 2-oxoglutarate + H(+) = 5-enolpyruvoyl-6-hydroxy-2-succinyl-cyclohex-3-ene-1-carboxylate + CO2. It functions in the pathway quinol/quinone metabolism; 1,4-dihydroxy-2-naphthoate biosynthesis; 1,4-dihydroxy-2-naphthoate from chorismate: step 2/7. It participates in quinol/quinone metabolism; menaquinone biosynthesis. Functionally, catalyzes the thiamine diphosphate-dependent decarboxylation of 2-oxoglutarate and the subsequent addition of the resulting succinic semialdehyde-thiamine pyrophosphate anion to isochorismate to yield 2-succinyl-5-enolpyruvyl-6-hydroxy-3-cyclohexene-1-carboxylate (SEPHCHC). The chain is 2-succinyl-5-enolpyruvyl-6-hydroxy-3-cyclohexene-1-carboxylate synthase from Halorhodospira halophila (strain DSM 244 / SL1) (Ectothiorhodospira halophila (strain DSM 244 / SL1)).